The sequence spans 155 residues: MKVIEGAIVAPNAKVAIVIARFNSFINESLLSGALDTLKRQGQVSYDNITIIRCPGAYELPLVAQLTAKSDRYDAIIALGSVIRGGTHFEYVASECNKGLAQVALDYNIPVAFGVLTVDYLEQAIERAGTKAGNKGAEAALMLLEMVNILAQVES.

Residues Phe22, 57–59, and 81–83 contribute to the 5-amino-6-(D-ribitylamino)uracil site; these read AYE and SVI. Residue 86 to 87 coordinates (2S)-2-hydroxy-3-oxobutyl phosphate; sequence GT. Catalysis depends on His88, which acts as the Proton donor. Position 113 (Phe113) interacts with 5-amino-6-(D-ribitylamino)uracil. Arg127 serves as a coordination point for (2S)-2-hydroxy-3-oxobutyl phosphate.

The protein belongs to the DMRL synthase family. As to quaternary structure, forms an icosahedral capsid composed of 60 subunits, arranged as a dodecamer of pentamers.

It carries out the reaction (2S)-2-hydroxy-3-oxobutyl phosphate + 5-amino-6-(D-ribitylamino)uracil = 6,7-dimethyl-8-(1-D-ribityl)lumazine + phosphate + 2 H2O + H(+). The protein operates within cofactor biosynthesis; riboflavin biosynthesis; riboflavin from 2-hydroxy-3-oxobutyl phosphate and 5-amino-6-(D-ribitylamino)uracil: step 1/2. Catalyzes the formation of 6,7-dimethyl-8-ribityllumazine by condensation of 5-amino-6-(D-ribitylamino)uracil with 3,4-dihydroxy-2-butanone 4-phosphate. This is the penultimate step in the biosynthesis of riboflavin. This is 6,7-dimethyl-8-ribityllumazine synthase from Photobacterium phosphoreum.